The sequence spans 277 residues: Adaptin ear-binding coat-associated protein 1 (277 aa).

Positions 164–277 are disordered; that stretch reads GNITAKKGGT…APQPSNWVQF (114 aa). The span at 187 to 201 shows a compositional bias: pro residues; it reads LPPPPGGKVTIPPPS. Threonine 211 bears the Phosphothreonine mark. Positions 222-234 are enriched in low complexity; that stretch reads SNDSDILLDLDSP. Pro residues predominate over residues 235–245; sequence APVPTSAPAPA. 2 consecutive short sequence motifs (WXXF motif) follow at residues 254 to 257 and 274 to 277; these read WGDF and WVQF. Over residues 258–277 the composition is skewed to polar residues; it reads STASSSVPNQAPQPSNWVQF.

This sequence belongs to the NECAP family. Interacts with AP1G1 and AP2A1 components of the adapter protein complexes AP-1 and AP-2. Interacts with the GAE domain proteins GGA1, GGA2 and GGA3. Interacts with AP2A2. Expressed predominantly in brain (at protein level).

Its subcellular location is the cytoplasmic vesicle. The protein resides in the clathrin-coated vesicle membrane. It is found in the cell membrane. Involved in endocytosis. The chain is Adaptin ear-binding coat-associated protein 1 (Necap1) from Rattus norvegicus (Rat).